The sequence spans 604 residues: 3-hydroxy-3-methylglutaryl-coenzyme A reductase (604 aa).

The disordered stretch occupies residues 1–31; it reads MDVRRRSEKPAYPTKEFAAGEKPLKPHKQQQ. A run of 2 helical transmembrane segments spans residues 40–62 and 90–110; these read ASDA…FFSV and AIAS…IGFV. Residues 111–189 form a linker region; sequence QSFVSRDNND…PLVTPAASEE (79 aa). The catalytic stretch occupies residues 190 to 604; that stretch reads DEEIIKSVVQ…STKDVTKASS (415 aa). Catalysis depends on E283, which acts as the Charge relay system. N347 is a glycosylation site (N-linked (GlcNAc...) asparagine). K415 functions as the Charge relay system in the catalytic mechanism. The N-linked (GlcNAc...) asparagine glycan is linked to N460. The active-site Charge relay system is the D491. The active-site Proton donor is H589. A glycan (N-linked (GlcNAc...) asparagine) is linked at N593.

It belongs to the HMG-CoA reductase family. In terms of tissue distribution, found in protoplasts and leaves submitted to stress. Low levels found in apexes, anthers and roots.

It is found in the endoplasmic reticulum membrane. It catalyses the reaction (R)-mevalonate + 2 NADP(+) + CoA = (3S)-3-hydroxy-3-methylglutaryl-CoA + 2 NADPH + 2 H(+). The protein operates within metabolic intermediate biosynthesis; (R)-mevalonate biosynthesis; (R)-mevalonate from acetyl-CoA: step 3/3. Its function is as follows. Catalyzes the synthesis of mevalonate, the specific precursor of all isoprenoid compounds present in plants. Possible role in plant defense mechanisms as well as in the cell cycle. The sequence is that of 3-hydroxy-3-methylglutaryl-coenzyme A reductase (HMGR) from Nicotiana sylvestris (Wood tobacco).